Here is a 446-residue protein sequence, read N- to C-terminus: Probable glycine dehydrogenase (decarboxylating) subunit 1 (446 aa).

Belongs to the GcvP family. N-terminal subunit subfamily. In terms of assembly, the glycine cleavage system is composed of four proteins: P, T, L and H. In this organism, the P 'protein' is a heterodimer of two subunits.

It carries out the reaction N(6)-[(R)-lipoyl]-L-lysyl-[glycine-cleavage complex H protein] + glycine + H(+) = N(6)-[(R)-S(8)-aminomethyldihydrolipoyl]-L-lysyl-[glycine-cleavage complex H protein] + CO2. The glycine cleavage system catalyzes the degradation of glycine. The P protein binds the alpha-amino group of glycine through its pyridoxal phosphate cofactor; CO(2) is released and the remaining methylamine moiety is then transferred to the lipoamide cofactor of the H protein. In Desulforamulus reducens (strain ATCC BAA-1160 / DSM 100696 / MI-1) (Desulfotomaculum reducens), this protein is Probable glycine dehydrogenase (decarboxylating) subunit 1.